The following is a 239-amino-acid chain: Small ribosomal subunit protein uS3c (239 aa).

The region spanning 43–139 (IKNYIQKNRK…RFNISIEKVK (97 aa)) is the KH type-2 domain. The interval 50-74 (NRKKGSNRKIESDSSSEVITHNRKM) is disordered.

It belongs to the universal ribosomal protein uS3 family. Part of the 30S ribosomal subunit.

Its subcellular location is the plastid. The protein resides in the chloroplast. This chain is Small ribosomal subunit protein uS3c (rps3), found in Hordeum vulgare (Barley).